A 360-amino-acid polypeptide reads, in one-letter code: Phospho-N-acetylmuramoyl-pentapeptide-transferase (360 aa).

Helical transmembrane passes span 27–47, 71–91, 93–113, 128–148, 168–188, 199–219, 239–259, 262–282, 288–308, and 337–357; these read GAMITSALIVFLFGPSIINSL, TPTMGGLMIMTGILVSCLLWA, LASVYVWVVLLVTVGFGAIGF, FSGKARLGIEFLIAAVAAFVI, FVVNLSWFFIPFAAFVMVGAG, GLAIVPVMVAAASFGFIAYLS, LAVVLGAVIGAGLGFLWFNAP, AIFMGDTGSLALGGMLGTVAV, IVLAIIGGLFVVEALSVIIQV, and QVVIRFWIVAIILAMIGLSTL.

It belongs to the glycosyltransferase 4 family. MraY subfamily. Mg(2+) is required as a cofactor.

The protein resides in the cell inner membrane. The enzyme catalyses UDP-N-acetyl-alpha-D-muramoyl-L-alanyl-gamma-D-glutamyl-meso-2,6-diaminopimeloyl-D-alanyl-D-alanine + di-trans,octa-cis-undecaprenyl phosphate = di-trans,octa-cis-undecaprenyl diphospho-N-acetyl-alpha-D-muramoyl-L-alanyl-D-glutamyl-meso-2,6-diaminopimeloyl-D-alanyl-D-alanine + UMP. Its pathway is cell wall biogenesis; peptidoglycan biosynthesis. Its function is as follows. Catalyzes the initial step of the lipid cycle reactions in the biosynthesis of the cell wall peptidoglycan: transfers peptidoglycan precursor phospho-MurNAc-pentapeptide from UDP-MurNAc-pentapeptide onto the lipid carrier undecaprenyl phosphate, yielding undecaprenyl-pyrophosphoryl-MurNAc-pentapeptide, known as lipid I. This Brucella anthropi (strain ATCC 49188 / DSM 6882 / CCUG 24695 / JCM 21032 / LMG 3331 / NBRC 15819 / NCTC 12168 / Alc 37) (Ochrobactrum anthropi) protein is Phospho-N-acetylmuramoyl-pentapeptide-transferase.